A 705-amino-acid chain; its full sequence is Elongation factor G (705 aa).

Residues glutamate 8–alanine 290 enclose the tr-type G domain. Residues alanine 17–threonine 24, aspartate 88–histidine 92, and asparagine 142–aspartate 145 each bind GTP. Residues alanine 290–alanine 309 form a disordered region.

It belongs to the TRAFAC class translation factor GTPase superfamily. Classic translation factor GTPase family. EF-G/EF-2 subfamily.

Its subcellular location is the cytoplasm. Its function is as follows. Catalyzes the GTP-dependent ribosomal translocation step during translation elongation. During this step, the ribosome changes from the pre-translocational (PRE) to the post-translocational (POST) state as the newly formed A-site-bound peptidyl-tRNA and P-site-bound deacylated tRNA move to the P and E sites, respectively. Catalyzes the coordinated movement of the two tRNA molecules, the mRNA and conformational changes in the ribosome. The protein is Elongation factor G of Xanthomonas axonopodis pv. citri (strain 306).